The following is a 378-amino-acid chain: Probable pectin lyase C (378 aa).

Residues 1–18 (MKVPFLQLLCLNAALASA) form the signal peptide. Intrachain disulfides connect Cys-81–Cys-100 and Cys-90–Cys-220. N-linked (GlcNAc...) asparagine glycosylation occurs at Asn-123. Residue Arg-250 is part of the active site. Residues Cys-316 and Cys-324 are joined by a disulfide bond.

This sequence belongs to the polysaccharide lyase 1 family.

The protein resides in the secreted. The enzyme catalyses Eliminative cleavage of (1-&gt;4)-alpha-D-galacturonan methyl ester to give oligosaccharides with 4-deoxy-6-O-methyl-alpha-D-galact-4-enuronosyl groups at their non-reducing ends.. Pectinolytic enzymes consist of four classes of enzymes: pectin lyase, polygalacturonase, pectin methylesterase and rhamnogalacturonase. Among pectinolytic enzymes, pectin lyase is the most important in depolymerization of pectin, since it cleaves internal glycosidic bonds of highly methylated pectins. In Aspergillus niger, this protein is Probable pectin lyase C (pelC).